The sequence spans 466 residues: Vimentin (466 aa).

Low complexity-rich tracts occupy residues 1 to 13 (MSTR…SYRR) and 20 to 33 (TSSR…YVTT). Residues 1-33 (MSTRSVSSSSYRRMFGGSGTSSRPSSNRSYVTT) form a disordered region. Ser2 is subject to N-acetylserine. The segment at 2 to 95 (STRSVSSSSY…FSLADAINTE (94 aa)) is head. Phosphoserine is present on Ser5. The residue at position 7 (Ser7) is a Phosphoserine; by PKA and PKC; alternate. A glycan (O-linked (GlcNAc) serine; alternate) is linked at Ser7. Ser8 bears the Phosphoserine mark. Phosphoserine; by PKC is present on residues Ser9 and Ser10. Thr20 is subject to Phosphothreonine. Ser21 is modified (phosphoserine; by PKC). Residue Ser25 is modified to Phosphoserine; by PKA and PKC. Position 26 is a phosphoserine; by PKC (Ser26). The O-linked (GlcNAc) threonine glycan is linked to Thr33. An O-linked (GlcNAc) serine; alternate glycan is attached at Ser34. Residue Ser34 is modified to Phosphoserine; by PKC; alternate. Residue Ser39 is modified to Phosphoserine; by CaMK2, PKA, PKC and ROCK2. Position 42 is a phosphoserine; by PKC (Ser42). Phosphoserine; by PKA is present on Ser47. Position 49 is a phosphoserine (Ser49). The residue at position 51 (Ser51) is a Phosphoserine; by PKA and PKC. Phosphotyrosine is present on Tyr53. Phosphoserine occurs at positions 55 and 56. The residue at position 61 (Tyr61) is a Phosphotyrosine. Ser66 carries the phosphoserine; by PKA and PKC modification. Phosphoserine; by AURKB and ROCK2 is present on Ser72. Ser73 is modified (phosphoserine). Position 83 is a phosphoserine; by CaMK2 (Ser83). Ser87 is subject to Phosphoserine. A coil 1A region spans residues 96–131 (FKNTRTNEKVELQELNDRFANYIDKVRFLEQQNKIL). The stretch at 96 to 131 (FKNTRTNEKVELQELNDRFANYIDKVRFLEQQNKIL) forms a coiled coil. Residues 103-411 (EKVELQELND…KLLEGEESRI (309 aa)) enclose the IF rod domain. Lys104 participates in a covalent cross-link: Glycyl lysine isopeptide (Lys-Gly) (interchain with G-Cter in SUMO2). A Phosphotyrosine modification is found at Tyr117. 3 positions are modified to N6-acetyllysine; alternate: Lys120, Lys129, and Lys139. 2 positions are modified to N6-succinyllysine; alternate: Lys120 and Lys129. Residues Lys120, Lys129, and Lys139 each participate in a glycyl lysine isopeptide (Lys-Gly) (interchain with G-Cter in SUMO2); alternate cross-link. A linker 1 region spans residues 132 to 153 (LAELEQLKGQGKSRLGDLYEEE). Ser144 is modified (phosphoserine). Residues 154–245 (MRELRRQVDQ…KLHDEEIQEL (92 aa)) are a coiled coil. Residues 154–245 (MRELRRQVDQ…KLHDEEIQEL (92 aa)) form a coil 1B region. Lys168 carries the N6-acetyllysine modification. Lys188 carries the post-translational modification N6-acetyllysine; alternate. N6-succinyllysine; alternate is present on Lys188. Ser214 is modified (phosphoserine). Lys223 carries the N6-acetyllysine; alternate modification. Residue Lys223 forms a Glycyl lysine isopeptide (Lys-Gly) (interchain with G-Cter in SUMO2); alternate linkage. At Ser226 the chain carries Phosphoserine. N6-acetyllysine is present on Lys235. The interval 246–268 (QAQIQEQHVQIDVDVSKPDLTAA) is linker 12. Residue Lys262 forms a Glycyl lysine isopeptide (Lys-Gly) (interchain with G-Cter in SUMO2) linkage. Positions 269–407 (LRDVRQQYES…ATYRKLLEGE (139 aa)) are coil 2. N6-acetyllysine; alternate is present on Lys294. An N6-succinyllysine; alternate modification is found at Lys294. Lys294 is covalently cross-linked (Glycyl lysine isopeptide (Lys-Gly) (interchain with G-Cter in SUMO2); alternate). At Ser299 the chain carries Phosphoserine. Positions 303 to 407 (NRNNDALRQA…ATYRKLLEGE (105 aa)) form a coiled coil. A Glycyl lysine isopeptide (Lys-Gly) (interchain with G-Cter in SUMO2) cross-link involves residue Lys313. Ser325 bears the Phosphoserine mark. The short motif at 326-329 (LTCE) is the [IL]-x-C-x-x-[DE] motif element. Lys373 carries the N6-acetyllysine; alternate modification. Residue Lys373 forms a Glycyl lysine isopeptide (Lys-Gly) (interchain with G-Cter in SUMO2); alternate linkage. Positions 408–466 (ESRISLPLPTFSSLNLRETNLESLPLVDTHSKRTLLIKTVETRDGQVINETSQHHDDLE) are tail. A phosphoserine mark is found at Ser409, Ser412, Ser419, and Ser420. Thr426 bears the Phosphothreonine mark. A Phosphoserine modification is found at Ser430. Thr436 bears the Phosphothreonine mark. Ser438 is subject to Phosphoserine. A Glycyl lysine isopeptide (Lys-Gly) (interchain with G-Cter in SUMO2) cross-link involves residue Lys439. Lys445 is modified (N6-acetyllysine; alternate). Lys445 carries the N6-succinyllysine; alternate modification. Residue Lys445 forms a Glycyl lysine isopeptide (Lys-Gly) (interchain with G-Cter in SUMO2); alternate linkage. Residue Lys445 forms a Glycyl lysine isopeptide (Lys-Gly) (interchain with G-Cter in SUMO1); alternate linkage. Residues Thr446 and Thr458 each carry the phosphothreonine modification. At Ser459 the chain carries Phosphoserine.

The protein belongs to the intermediate filament family. In terms of assembly, homomer assembled from elementary dimers. Identified in complexes that contain VIM, EZR, AHNAK, BFSP1, BFSP2, ANK2, PLEC, PRX and spectrin. Interacts with BCAS3. Interacts with LGSN. Interacts with SYNM. Interacts (via rod region) with PLEC (via CH 1 domain). Interacts with PLEC isoform 1C. Interacts with STK33. Interacts with LARP6. Interacts with RAB8B. Interacts with TOR1A; the interaction associates TOR1A with the cytoskeleton. Interacts with TOR1AIP1. Interacts with DIAPH1. Interacts with EPPK1; interaction is dependent of higher-order structure of intermediate filament. Interacts with the non-receptor tyrosine kinase SRMS; the interaction leads to phosphorylation of VIM. Interacts with NOD2. Interacts (via head region) with CORO1C. Interacts with HDGF. Interacts with PRKCE (via phorbol-ester/DAG-type 2 domain). Interacts with BFSP2. Interacts with PPL. Interacts with PKP1 and PKP2. Interacts with SCRIB (via PDZ domains); the interaction protects SCRIB from proteasomal degradation and facilitates SCRIB localization to intermediate filaments, the interaction is reduced by cell contact inhibition. Phosphorylation by PKN1 inhibits the formation of filaments. Filament disassembly during mitosis is promoted by phosphorylation at Ser-55 as well as by nestin. One of the most prominent phosphoproteins in various cells of mesenchymal origin. Phosphorylation is enhanced during cell division, at which time vimentin filaments are significantly reorganized. Phosphorylated at Ser-56 by CDK5 during neutrophil secretion in the cytoplasm. Phosphorylated by STK33. Phosphorylated on tyrosine residues by SRMS. Post-translationally, S-nitrosylation is induced by interferon-gamma and oxidatively-modified low-densitity lipoprotein (LDL(ox)) possibly implicating the iNOS-S100A8/9 transnitrosylase complex. Detected in eye lens fiber cells (at protein level). Expressed in retinal lens epithelial cells (at protein level). Expressed in Langerhans cells in the epidermis (at protein level).

It localises to the cytoplasm. The protein resides in the cytoskeleton. Its subcellular location is the nucleus matrix. It is found in the cell membrane. In terms of biological role, vimentins are class-III intermediate filaments found in various non-epithelial cells, especially mesenchymal cells. Vimentin is attached to the nucleus, endoplasmic reticulum, and mitochondria, either laterally or terminally. Plays a role in cell directional movement, orientation, cell sheet organization and Golgi complex polarization at the cell migration front. Protects SCRIB from proteasomal degradation and facilitates its localization to intermediate filaments in a cell contact-mediated manner. Involved with LARP6 in the stabilization of type I collagen mRNAs for CO1A1 and CO1A2. The polypeptide is Vimentin (Mus musculus (Mouse)).